We begin with the raw amino-acid sequence, 327 residues long: Small ribosomal subunit protein RACK1z (327 aa).

WD repeat units lie at residues 13-44 (AHTDMVTAIATPIDNADIIVSASRDKSIILWK), 61-91 (GHSHFVEDVVLSSDGQFALSGSWDGELRLWD), 103-133 (GHTKDVLSVAFSLDNRQIVSASRDRTIKLWN), 148-180 (GHRDWVSCVRFSPNTLQPTIVSASWDKTVKVWN), 192-222 (GHTGYVSTVAVSPDGSLCASGGKDGVVLLWD), 233-262 (EANSVIHALCFSPNRYWLCAATEHGIKIWD), and 293-323 (RKVIYCTSLNWSADGSTLFSGYTDGVIRVWG).

This sequence belongs to the WD repeat G protein beta family. Ribosomal protein RACK1 subfamily. As to quaternary structure, homodimer and heterodimer with RACK1B or RACK1C. Interacts with NUDT7. Interacts with GB1, MEKK1, MKK4, MKK5, MPK3 and MPK6, but not with GPA1 or MPK4. Interacts with OFUT20. As to expression, widely expressed.

The protein localises to the cytoplasm. The protein resides in the nucleus. Major component of the RACK1 regulatory proteins that play a role in multiple signal transduction pathways. Involved in multiple hormone responses and developmental processes. MAPK cascade scaffolding protein involved in the protease IV and ArgC signaling pathway but not the flg22 pathway. The polypeptide is Small ribosomal subunit protein RACK1z (Arabidopsis thaliana (Mouse-ear cress)).